The following is a 122-amino-acid chain: MVQQYTRLNVADNTGAKKIMCINVLGGSHKIQAKVGDVIVAAVKKSSPDAQAKSGTVVKAVVVRITKPYARPDGSYIKFDDNAAVILNDKMEPKGTRIFGPVARELRDKKFTKILSLAPEVL.

Belongs to the universal ribosomal protein uL14 family. Part of the 50S ribosomal subunit. Forms a cluster with proteins L3 and L19. In the 70S ribosome, L14 and L19 interact and together make contacts with the 16S rRNA in bridges B5 and B8.

Functionally, binds to 23S rRNA. Forms part of two intersubunit bridges in the 70S ribosome. This is Large ribosomal subunit protein uL14 from Dehalococcoides mccartyi (strain ATCC BAA-2100 / JCM 16839 / KCTC 5957 / BAV1).